The primary structure comprises 901 residues: MDQPRTHSGPTTASNPAPSSTNSSSAPSATNSKQERSSSSLSKPSSVVPSKDSPDGDAIAKTQAAALKNDMKSGDTSTLDGSSQNIIPNRASMQKYIDQSSDLLSRSSGVITPSMSLNASTNATNNDSSGNSANSSDLKIPIDRDNTIFKTFDTKTGQFLKNDDNEEEIRRNNKVDSIPPKNIYTNINNPSPSPPPSSKQPPSASAPQLPPATEPHKEQAAQQQPPGNASNFLRIFSNKKMRSHSVPTILHSSLRKLSSHNQYYRNQNILLNHPTPSGISKKKFSRNHHQPYLHSNNPLSSNPLSLKRAIFLNQQISGNASTNANNDNINNSTATSMTNQSFLSSSNFDLTLEDRINYIKATPTPVPFPPINLQGLKEIDLQEILKNPQLRHDIIFDPLLQFRPNLDGERGNKKRQLANIYWNDVQNEIYVYSKRPEIFQYNRSRLVPLFDTLRDVLLTIVPQKESPMINNVLDTELNIQELLKGSLIMSNLSGWLADLFKHHCAPMRDPWVDKMSNKFKEAERDSSLTRLIEGLRLVFQILETMKLDIANHQIRILRPALLSNAVEFEKQYFNTLIASKRVNLNTSLLWFDKKFNENVTAGLVRNPSSITIPDVYNICIRSIINLLSCRKMVREYPTPLSFDHARLILLRADIRQIVCILVCRLLFQQLVANDPSMDKATKEYVIHTYSTKRLKNEIISIITDEHGNCRWTKNTMSIAVHLCKVIDDLHREYDNNGSCEQARRPQLPSLDNSKITFAKSWLSKQTQPLSEVYGVLENRVFKSLEDAIFNRSECTIDGRVKQDFVYLYNTNNGNVGSTNTLSTTTDTASVKISPSLMSPSKTSTTTPTGNAIASRGLFAATELEEFENVYRHLYALINLHWSVFGPHYIEMLGDKVNKKGI.

Disordered regions lie at residues 1–87 (MDQP…QNII), 106–139 (RSSGVITPSMSLNASTNATNNDSSGNSANSSDLK), and 162–231 (NDDN…NASN). Residues 10 to 51 (PTTASNPAPSSTNSSSAPSATNSKQERSSSSLSKPSSVVPSK) are compositionally biased toward low complexity. 2 positions are modified to phosphoserine: serine 40 and serine 53. Polar residues-rich tracts occupy residues 74–87 (GDTSTLDGSSQNII) and 106–115 (RSSGVITPSM). The span at 116–138 (SLNASTNATNNDSSGNSANSSDL) shows a compositional bias: low complexity. A phosphoserine mark is found at serine 191 and serine 193. Polar residues predominate over residues 220–231 (AAQQQPPGNASN). Serine 245 carries the post-translational modification Phosphoserine.

The protein belongs to the TCP11 family.

Its subcellular location is the nucleus. High copy suppressor of a cyclic AMP-dependent protein kinase mutant. The polypeptide is Protein SOK1 (SOK1) (Saccharomyces cerevisiae (strain ATCC 204508 / S288c) (Baker's yeast)).